The sequence spans 124 residues: Small ribosomal subunit protein uS12 (124 aa).

Aspartate 89 carries the 3-methylthioaspartic acid modification. Positions 103–124 (DTAGVQNRNRGRSKYGAKRPKK) are disordered. The span at 111–124 (NRGRSKYGAKRPKK) shows a compositional bias: basic residues.

It belongs to the universal ribosomal protein uS12 family. As to quaternary structure, part of the 30S ribosomal subunit. Contacts proteins S8 and S17. May interact with IF1 in the 30S initiation complex.

In terms of biological role, with S4 and S5 plays an important role in translational accuracy. Interacts with and stabilizes bases of the 16S rRNA that are involved in tRNA selection in the A site and with the mRNA backbone. Located at the interface of the 30S and 50S subunits, it traverses the body of the 30S subunit contacting proteins on the other side and probably holding the rRNA structure together. The combined cluster of proteins S8, S12 and S17 appears to hold together the shoulder and platform of the 30S subunit. This Desulforudis audaxviator (strain MP104C) protein is Small ribosomal subunit protein uS12.